The following is a 212-amino-acid chain: ATP phosphoribosyltransferase 2 (212 aa).

This sequence belongs to the ATP phosphoribosyltransferase family. Short subfamily. Heteromultimer composed of HisG and HisZ subunits.

It is found in the cytoplasm. It carries out the reaction 1-(5-phospho-beta-D-ribosyl)-ATP + diphosphate = 5-phospho-alpha-D-ribose 1-diphosphate + ATP. It functions in the pathway amino-acid biosynthesis; L-histidine biosynthesis; L-histidine from 5-phospho-alpha-D-ribose 1-diphosphate: step 1/9. Functionally, catalyzes the condensation of ATP and 5-phosphoribose 1-diphosphate to form N'-(5'-phosphoribosyl)-ATP (PR-ATP). Has a crucial role in the pathway because the rate of histidine biosynthesis seems to be controlled primarily by regulation of HisG enzymatic activity. This chain is ATP phosphoribosyltransferase 2 (hisG2), found in Geobacter sulfurreducens (strain ATCC 51573 / DSM 12127 / PCA).